We begin with the raw amino-acid sequence, 252 residues long: 3-deoxy-manno-octulosonate cytidylyltransferase (252 aa).

This sequence belongs to the KdsB family.

The protein resides in the cytoplasm. It carries out the reaction 3-deoxy-alpha-D-manno-oct-2-ulosonate + CTP = CMP-3-deoxy-beta-D-manno-octulosonate + diphosphate. It participates in nucleotide-sugar biosynthesis; CMP-3-deoxy-D-manno-octulosonate biosynthesis; CMP-3-deoxy-D-manno-octulosonate from 3-deoxy-D-manno-octulosonate and CTP: step 1/1. It functions in the pathway bacterial outer membrane biogenesis; lipopolysaccharide biosynthesis. Activates KDO (a required 8-carbon sugar) for incorporation into bacterial lipopolysaccharide in Gram-negative bacteria. The sequence is that of 3-deoxy-manno-octulosonate cytidylyltransferase from Nitratidesulfovibrio vulgaris (strain ATCC 29579 / DSM 644 / CCUG 34227 / NCIMB 8303 / VKM B-1760 / Hildenborough) (Desulfovibrio vulgaris).